Here is a 205-residue protein sequence, read N- to C-terminus: Adenylyl-sulfate kinase (205 aa).

31–38 (GLSGSGKS) contacts ATP. The active-site Phosphoserine intermediate is the Ser105.

It belongs to the APS kinase family.

It carries out the reaction adenosine 5'-phosphosulfate + ATP = 3'-phosphoadenylyl sulfate + ADP + H(+). It functions in the pathway sulfur metabolism; hydrogen sulfide biosynthesis; sulfite from sulfate: step 2/3. Its function is as follows. Catalyzes the synthesis of activated sulfate. The protein is Adenylyl-sulfate kinase of Shewanella pealeana (strain ATCC 700345 / ANG-SQ1).